The sequence spans 1992 residues: Fer-1-like protein 4 (1992 aa).

3 consecutive C2 domains span residues 1 to 97, 214 to 330, and 369 to 502; these read MALT…VLRE, PRGD…QKWA, and TSSD…AGFN. At 1-1952 the chain is on the extracellular side; the sequence is MALTVCVRHL…PLKTFIFFIW (1952 aa). Disordered stretches follow at residues 554 to 606, 661 to 686, and 691 to 710; these read RVEP…APEI, AGRQ…LEVQ, and SEDR…PAQW. Over residues 559–569 the composition is skewed to polar residues; that stretch reads PSQTTQRSGLS. A compositionally biased stretch (basic residues) spans 572 to 581; sequence TGKKKKKKEK. C2 domains follow at residues 951–1078 and 1126–1250; these read PSSG…ELQF and ISGH…PQEE. Disordered stretches follow at residues 1245–1276 and 1322–1361; these read EDPQ…EAGT and FQGQ…SKVS. Acidic residues-rich tracts occupy residues 1247-1257 and 1328-1337; these read PQEEEETEEET and SDDEMDEAGD. 2 consecutive C2 domains span residues 1430-1549 and 1675-1824; these read SFSE…ANCG and VPAP…EHCS. 8 residues coordinate Ca(2+): Asp-1464, Asp-1470, Asp-1519, Asp-1521, Asp-1527, Asp-1795, Ser-1798, and Asp-1801. The tract at residues 1862–1885 is disordered; sequence EAREAQAGKKRKRKRRAGRPEDLE. A compositionally biased stretch (basic residues) spans 1869-1878; the sequence is GKKRKRKRRA. Residues 1953 to 1973 traverse the membrane as a helical segment; it reads RRYWRILVLLLLALITIFLLL. Topologically, residues 1974-1992 are cytoplasmic; sequence VFYTIPGQISEVIFSPVHK.

The cofactor is Ca(2+).

It is found in the membrane. The sequence is that of Fer-1-like protein 4 (Fer1l4) from Mus musculus (Mouse).